We begin with the raw amino-acid sequence, 306 residues long: Proteasome subunit beta (306 aa).

A propeptide spans 1-67 (MTWPNRDQPA…GLPTDAVPHG (67 aa)) (removed in mature form; by autocatalysis). Threonine 68 serves as the catalytic Nucleophile.

This sequence belongs to the peptidase T1B family. The 20S proteasome core is composed of 14 alpha and 14 beta subunits that assemble into four stacked heptameric rings, resulting in a barrel-shaped structure. The two inner rings, each composed of seven catalytic beta subunits, are sandwiched by two outer rings, each composed of seven alpha subunits. The catalytic chamber with the active sites is on the inside of the barrel. Has a gated structure, the ends of the cylinder being occluded by the N-termini of the alpha-subunits. Is capped by the proteasome-associated ATPase, ARC.

It localises to the cytoplasm. The catalysed reaction is Cleavage of peptide bonds with very broad specificity.. The protein operates within protein degradation; proteasomal Pup-dependent pathway. With respect to regulation, the formation of the proteasomal ATPase ARC-20S proteasome complex, likely via the docking of the C-termini of ARC into the intersubunit pockets in the alpha-rings, may trigger opening of the gate for substrate entry. Interconversion between the open-gate and close-gate conformations leads to a dynamic regulation of the 20S proteasome proteolysis activity. Its function is as follows. Component of the proteasome core, a large protease complex with broad specificity involved in protein degradation. This is Proteasome subunit beta from Mycolicibacterium vanbaalenii (strain DSM 7251 / JCM 13017 / BCRC 16820 / KCTC 9966 / NRRL B-24157 / PYR-1) (Mycobacterium vanbaalenii).